Consider the following 160-residue polypeptide: Keratin-associated protein 13-4 (160 aa).

Tandem repeats lie at residues 41–50, 51–60, 61–70, and 77–86. The interval 41–86 is 4 X 10 AA approximate repeats; the sequence is CQLGSSLYRDCQKTCWEPASCQKSCYHPRTSMLCCPCQTTCSGSLG.

This sequence belongs to the PMG family. As to quaternary structure, interacts with hair keratins.

In terms of biological role, in the hair cortex, hair keratin intermediate filaments are embedded in an interfilamentous matrix, consisting of hair keratin-associated proteins (KRTAP), which are essential for the formation of a rigid and resistant hair shaft through their extensive disulfide bond cross-linking with abundant cysteine residues of hair keratins. The matrix proteins include the high-sulfur and high-glycine-tyrosine keratins. This is Keratin-associated protein 13-4 (KRTAP13-4) from Hylobates agilis (Agile gibbon).